The following is a 493-amino-acid chain: Glutamyl-tRNA(Gln) amidotransferase subunit A (493 aa).

Residues K79 and S159 each act as charge relay system in the active site. The active-site Acyl-ester intermediate is S183.

Belongs to the amidase family. GatA subfamily. Heterotrimer of A, B and C subunits.

It catalyses the reaction L-glutamyl-tRNA(Gln) + L-glutamine + ATP + H2O = L-glutaminyl-tRNA(Gln) + L-glutamate + ADP + phosphate + H(+). Functionally, allows the formation of correctly charged Gln-tRNA(Gln) through the transamidation of misacylated Glu-tRNA(Gln) in organisms which lack glutaminyl-tRNA synthetase. The reaction takes place in the presence of glutamine and ATP through an activated gamma-phospho-Glu-tRNA(Gln). The chain is Glutamyl-tRNA(Gln) amidotransferase subunit A from Rhizobium johnstonii (strain DSM 114642 / LMG 32736 / 3841) (Rhizobium leguminosarum bv. viciae).